Here is a 355-residue protein sequence, read N- to C-terminus: Aromatic amino acid aminotransferase (355 aa).

Lysine 217 carries the post-translational modification N6-(pyridoxal phosphate)lysine.

This sequence belongs to the class-II pyridoxal-phosphate-dependent aminotransferase family. In terms of assembly, homodimer. Pyridoxal 5'-phosphate is required as a cofactor.

The enzyme catalyses an aromatic L-alpha-amino acid + 2-oxoglutarate = an aromatic oxo-acid + L-glutamate. Functionally, aminotransferase that catalyzes the conversion of aromatic amino acids and 2-oxoglutarate into corresponding aromatic oxo acids and L-glutamate. This Mycobacterium avium (strain 104) protein is Aromatic amino acid aminotransferase.